The sequence spans 284 residues: 4-diphosphocytidyl-2-C-methyl-D-erythritol kinase (284 aa).

The active site involves Lys-13. ATP is bound at residue 96 to 106; the sequence is PMGGGLGGGSS. The active site involves Asp-138.

The protein belongs to the GHMP kinase family. IspE subfamily.

It catalyses the reaction 4-CDP-2-C-methyl-D-erythritol + ATP = 4-CDP-2-C-methyl-D-erythritol 2-phosphate + ADP + H(+). The protein operates within isoprenoid biosynthesis; isopentenyl diphosphate biosynthesis via DXP pathway; isopentenyl diphosphate from 1-deoxy-D-xylulose 5-phosphate: step 3/6. In terms of biological role, catalyzes the phosphorylation of the position 2 hydroxy group of 4-diphosphocytidyl-2C-methyl-D-erythritol. The sequence is that of 4-diphosphocytidyl-2-C-methyl-D-erythritol kinase from Chromobacterium violaceum (strain ATCC 12472 / DSM 30191 / JCM 1249 / CCUG 213 / NBRC 12614 / NCIMB 9131 / NCTC 9757 / MK).